The sequence spans 1550 residues: MPEVRSSTQSESGMSQWMGKILSIRGAGLIIGVFGLCALIAATSVTLPPEQQLIVAFVCVVIFFIVGHKPSRRSQIFLEVLSGLVSLRYLTWRLTETLSFDTWLQGLLGTMLLVAELYALMMLFLSYFQTIAPLHRAPLPLPPNPDEWPTVDIFVPTYNEELSIVRLTVLGSLGIDWPPEKVRVHILDDGRRPEFAAFAAECGANYIARPTNEHAKAGNLNYAIGHTDGDYILIFDCDHVPTRAFLQLTMGWMVEDPKIALMQTPHHFYSPDPFQRNLSAGYRTPPEGNLFYGVVQDGNDFWDATFFCGSCAILRRTAIEQIGGFATQTVTEDAHTALKMQRLGWSTAYLRIPLAGGLATERLILHIGQRVRWARGMLQIFRIDNPLFGRGLSWGQRLCYLSAMTSFLFAVPRVIFLSSPLAFLFFGQNIIAASPLALLAYAIPHMFHAVGTASKINKGWRYSFWSEVYETTMALFLVRVTIVTLLSPSRGKFNVTDKGGLLEKGYFDLGAVYPNIILGLIMFGGLARGVYELSFGHLDQIAERAYLLNSAWAMLSLIIILAAIAVGRETQQKRNSHRIPATIPVEVANADGSIIVTGVTEDLSMGGAAVKMSWPAKLSGPTPVYIRTVLDGEELILPARIIRAGNGRGIFIWTIDNLQQEFSVIRLVFGRADAWVDWGNYKADRPLLSLMDMVLSVKGLFRSSGDIVHRSSPTKPSAGNALSDDTNNPSRKERVLKGTVKMVSLLALLTFASSAQAASAPRAVAAKAPAHQPEASDLPPLPALLPATSGAAQAGSGDAGADGPGSPTGQPLAADSADALVENAENTSDTATVHNYTLKDLGAAGSITMRGLAPLQGIEFGIPSDQLVTSARLVLSGSMSPNLRPETNSVTMTLNEQYIGTLRPDPAHPTFGPMSFEINPIFFVSGNRLNFNFASGSKGCSDITNDTLWATISQNSQLQITTIALPPRRLLSRLPQPFYDKNVRQHVTVPMVLAQTYDPQILKSAGILASWFGKQTDFLGVTFPVSSTIPQSGNAILIGVADELPTSFGRPQVNGPAVLELPNPSDANATILVVTGRDRDEVITASKGIAFASAPLPTDSHMDVAPVDIAPRKPNDAPSFIAMDHPVRFGDLVTASKLQGTGFTSGVLSVPFRIPPDLYTWRNRPYKMQVRFRSPAGEAKDVEKSRLDVGINEVYLHSYPLRETHGLIGAVLQGVGLARPASGMQVHDLDVPPWTVFGQDQLNFYFDAMPLARGICQSGAANNAFHLGLDPDSTIDFSRAHHIAQMPNLAYMATVGFPFTTYADLSQTAVVLPEHPNAATVGAYLDLMGFMGAATWYPVAGVDIVSADHVSDVADRNLLVISTLATSGEIAPLLSRSSYEVADGHLRTVSHASALDNAIKAVDDPLTAFRDRDSKPQDVDTPLTGGVGAMIEAESPLTAGRTVLALLSSDGAGLNNLLQMLGERKKQANIQGDLVVAHGEDLSSYRTSPVYTIGTLPLWLWPDWYMHNRPVRVLLVGLLGCILIVSVLARALARHAARRFKQLEDERRKS.

Residues 1 to 741 (MPEVRSSTQS…KERVLKGTVK (741 aa)) are catalytic. 3 helical membrane-spanning segments follow: residues 26–46 (GAGL…TSVT), 47–67 (LPPE…FIVG), and 106–126 (GLLG…LFLS). The tract at residues 147-240 (EWPTVDIFVP…YILIFDCDHV (94 aa)) is catalytic subdomain A. Asp-189 is a catalytic residue. Substrate-binding residues include Asp-236 and Asp-238. The interval 317-377 (TAIEQIGGFA…GQRVRWARGM (61 aa)) is catalytic subdomain B. The active site involves Asp-333. 5 helical membrane-spanning segments follow: residues 398–418 (LCYL…IFLS), 423–443 (FLFF…AYAI), 468–488 (VYET…LLSP), 507–527 (FDLG…GGLA), and 547–567 (LLNS…IAVG). Positions 572-647 (QKRNSHRIPA…PARIIRAGNG (76 aa)) constitute a PilZ domain. 2 disordered regions span residues 708–731 (VHRS…NPSR) and 768–813 (APAH…QPLA). A cyclic di-GMP binding domain region spans residues 742–1550 (MVSLLALLTF…KQLEDERRKS (809 aa)). Over residues 768 to 796 (APAHQPEASDLPPLPALLPATSGAAQAGS) the composition is skewed to low complexity. A helical transmembrane segment spans residues 1513–1533 (VLLVGLLGCILIVSVLARALA).

In the N-terminal section; belongs to the glycosyltransferase 2 family. The protein in the C-terminal section; belongs to the AcsB/BcsB family. Requires Mg(2+) as cofactor.

It is found in the cell inner membrane. The catalysed reaction is [(1-&gt;4)-beta-D-glucosyl](n) + UDP-alpha-D-glucose = [(1-&gt;4)-beta-D-glucosyl](n+1) + UDP + H(+). It participates in glycan metabolism; bacterial cellulose biosynthesis. Bifunctional protein comprised of a catalytic subunit and a regulatory subunit. The catalytic subunit of cellulose synthase polymerizes uridine 5'-diphosphate glucose to cellulose in a processive way. The thick cellulosic mats generated by this enzyme probably provide a specialized protective environment to the bacterium. The regulatory subunit binds bis-(3'-5') cyclic diguanylic acid (c-di-GMP). The polypeptide is Cellulose synthase 1 (acsAB) (Novacetimonas hansenii (Komagataeibacter hansenii)).